Here is a 72-residue protein sequence, read N- to C-terminus: Phycobilisome 37.5 kDa linker polypeptide, phycocyanin-associated, rod (72 aa).

In terms of domain architecture, PBS-linker spans 1–72 (MTSSAAAIRL…ASGNISVREF (72 aa)).

It belongs to the phycobilisome linker protein family.

It is found in the cellular thylakoid membrane. Its function is as follows. Rod linker protein, associated with phycocyanin. Linker polypeptides determine the state of aggregation and the location of the disk-shaped phycobiliprotein units within the phycobilisome and modulate their spectroscopic properties in order to mediate a directed and optimal energy transfer. This is Phycobilisome 37.5 kDa linker polypeptide, phycocyanin-associated, rod (cpcH2) from Pseudanabaena tenuis (strain PCC 7409).